Reading from the N-terminus, the 527-residue chain is Ankyrin repeat domain-containing protein 42 (527 aa).

The disordered stretch occupies residues 1-27; it reads MPGVANPGPSKSRRETADSSSRKKVHF. Residues 12 to 21 show a composition bias toward basic and acidic residues; the sequence is SRRETADSSS. 10 ANK repeats span residues 25–54, 59–88, 92–121, 125–154, 158–187, 191–220, 228–257, 263–293, 297–326, and 330–360; these read VHFS…NLNE, HQFT…DATQ, RGWT…NLAT, RGCT…DPSV, REWK…GIED, NGNL…SATQ, NGEN…EGSH, DLAF…NLNE, NGST…ESNI, and AGET…EIDD. A coiled-coil region spans residues 395–484; sequence NARMRAHKKI…ETLQKIQVTS (90 aa).

In Mus musculus (Mouse), this protein is Ankyrin repeat domain-containing protein 42 (Ankrd42).